Here is a 519-residue protein sequence, read N- to C-terminus: Protein nucleotidyltransferase YdiU (519 aa).

The ATP site is built by glycine 100, glycine 102, arginine 103, lysine 123, aspartate 135, glycine 136, arginine 193, and arginine 200. Aspartate 270 (proton acceptor) is an active-site residue. The Mg(2+) site is built by asparagine 271 and aspartate 280. Aspartate 280 contacts ATP.

It belongs to the SELO family. It depends on Mg(2+) as a cofactor. Mn(2+) serves as cofactor.

It catalyses the reaction L-seryl-[protein] + ATP = 3-O-(5'-adenylyl)-L-seryl-[protein] + diphosphate. The enzyme catalyses L-threonyl-[protein] + ATP = 3-O-(5'-adenylyl)-L-threonyl-[protein] + diphosphate. The catalysed reaction is L-tyrosyl-[protein] + ATP = O-(5'-adenylyl)-L-tyrosyl-[protein] + diphosphate. It carries out the reaction L-histidyl-[protein] + UTP = N(tele)-(5'-uridylyl)-L-histidyl-[protein] + diphosphate. It catalyses the reaction L-seryl-[protein] + UTP = O-(5'-uridylyl)-L-seryl-[protein] + diphosphate. The enzyme catalyses L-tyrosyl-[protein] + UTP = O-(5'-uridylyl)-L-tyrosyl-[protein] + diphosphate. Functionally, nucleotidyltransferase involved in the post-translational modification of proteins. It can catalyze the addition of adenosine monophosphate (AMP) or uridine monophosphate (UMP) to a protein, resulting in modifications known as AMPylation and UMPylation. This Xylella fastidiosa (strain 9a5c) protein is Protein nucleotidyltransferase YdiU.